The primary structure comprises 655 residues: Peroxidase skpo-1 (655 aa).

A signal peptide spans 1–19 (MKSLLFSILLIYLIQLVRS). Residues 22–56 (CTDKHIHCFFWSQEGECEVNPRWMKKHCQKACGTC) form the ShKT domain. Intrachain disulfides connect cysteine 22-cysteine 56, cysteine 29-cysteine 49, cysteine 38-cysteine 53, and cysteine 133-cysteine 150. Residue histidine 222 is the Proton acceptor of the active site. Histidine 428 is a binding site for heme b. 2 cysteine pairs are disulfide-bonded: cysteine 520/cysteine 576 and cysteine 617/cysteine 642.

This sequence belongs to the peroxidase family. XPO subfamily. The cofactor is heme b. In terms of tissue distribution, exclusively expressed in hypodermis.

It carries out the reaction 2 a phenolic donor + H2O2 = 2 a phenolic radical donor + 2 H2O. In terms of biological role, involved in hypodermal immune response against some types of bacterial infection. Probably utilizes H(2)O(2) produced by the NADPH oxidase bli-3. May play a role in cuticule biosynthesis. The protein is Peroxidase skpo-1 of Caenorhabditis elegans.